The chain runs to 249 residues: Putative protein SNX29P2 (249 aa).

2 disordered regions span residues 109-171 and 188-249; these read QVTN…SNSW and DVKS…PGFK. The span at 156-170 shows a compositional bias: low complexity; it reads SPFGPNSNGSQSSNS. A compositionally biased stretch (acidic residues) spans 193-204; it reads DDEDVDENEDDV. A compositionally biased stretch (polar residues) spans 226-242; that stretch reads HSVTQAGVQWHDLSSLQ.

The protein belongs to the sorting nexin family.

The protein is Putative protein SNX29P2 (SNX29P2) of Homo sapiens (Human).